Here is a 2240-residue protein sequence, read N- to C-terminus: Death-inducer obliterator 1 (2240 aa).

An N-acetylmethionine modification is found at methionine 1. Residues 1–25 show a composition bias toward basic and acidic residues; the sequence is MDDKGDPSNEEAPKAIKPTSKEFRK. The segment at 1–259 is disordered; that stretch reads MDDKGDPSNE…EPGDLGRPKP (259 aa). 2 positions are modified to phosphoserine: serine 60 and serine 114. A compositionally biased stretch (polar residues) spans 111–130; the sequence is SEGSVESASETRSGPQSAST. Residues 132–146 show a composition bias toward basic and acidic residues; it reads VKERPASSEKVKGGD. Over residues 147-156 the composition is skewed to acidic residues; the sequence is DHDDTSDSDS. The residue at position 151 (threonine 151) is a Phosphothreonine. Serine 152 and serine 154 each carry phosphoserine. Short sequence motifs (nuclear localization signal) lie at residues 165–173 and 185–193; these read QNRLRRKRE and QSRLRKKRR. Over residues 172-181 the composition is skewed to basic and acidic residues; sequence REQEPTERPL. The span at 230 to 246 shows a compositional bias: basic and acidic residues; it reads GKDDRESKLEGKAAQDI. Residue lysine 247 forms a Glycyl lysine isopeptide (Lys-Gly) (interchain with G-Cter in SUMO2) linkage. The segment at 268–322 adopts a PHD-type zinc-finger fold; that stretch reads ALYCICRQPHNNRFMICCDRCEEWFHGDCVGISEARGRLLERNGEDYICPNCTIL. 9 disordered regions span residues 431-456, 501-567, 584-618, 773-826, 860-947, 1013-1045, 1206-1427, 1453-1472, and 1517-2240; these read SGKEQKPKPKEKMKMKPEKPSLPKCG, STPS…RNLV, KKPPSGFKGTIPKRPWLSATPSSGASAARQAGPAP, RPAR…EKST, VPSA…EDLS, LAKPSSSPDPRYLSVPPSPNISTSESRSPPEGD, GELD…VAYD, RRNSVERPAEPVAGAATPSL, and SDAL…ASQA. Positions 433-451 are enriched in basic and acidic residues; it reads KEQKPKPKEKMKMKPEKPS. Positions 501 to 510 are enriched in polar residues; the sequence is STPSWASDHN. Serine 523 carries the phosphoserine modification. Over residues 530–541 the composition is skewed to basic and acidic residues; sequence STKEDRRSEEKA. Composition is skewed to low complexity over residues 542-551 and 604-618; these read AAMAASKKTA and PSSGASAARQAGPAP. Residues 670 to 790 enclose the TFIIS central domain; that stretch reads IRQNIRRSLK…SRTKLHNESK (121 aa). Basic and acidic residues predominate over residues 773 to 791; that stretch reads RPARSVMESRTKLHNESKK. Residues 800-815 are compositionally biased toward acidic residues; the sequence is PDLEDSPPVSDSEEQQ. A phosphoserine mark is found at serine 805 and serine 809. Basic and acidic residues predominate over residues 878 to 890; sequence VKKEDLKSKHDSS. Lysine 879 is covalently cross-linked (Glycyl lysine isopeptide (Lys-Gly) (interchain with G-Cter in SUMO2)). A phosphoserine mark is found at serine 889 and serine 898. Residues 930–941 show a composition bias toward pro residues; it reads PGPPGDGHPEPS. Phosphoserine is present on residues serine 1019, serine 1030, and serine 1040. The segment covering 1207–1220 has biased composition (basic and acidic residues); the sequence is ELDKMDEKRTRLQP. Tyrosine 1244 bears the Phosphotyrosine mark. Threonine 1256 bears the Phosphothreonine mark. The segment covering 1258 to 1271 has biased composition (pro residues); it reads PGSPPPPPPLPEPP. 2 positions are modified to phosphoserine: serine 1260 and serine 1312. Residues 1276–1313 are compositionally biased toward low complexity; sequence LSSLKPAAPSPATAATTAAAASTAASSTASSASKTASP. Residues 1376 to 1392 are compositionally biased toward acidic residues; it reads LEEEEDDRPYDPEEEYD. The segment covering 1393–1424 has biased composition (basic and acidic residues); the sequence is PERAFDTQLVERGRRHEVERAPEAAAAEREEV. A Phosphoserine modification is found at serine 1456. Phosphothreonine is present on threonine 1469. Serine 1522 and serine 1714 each carry phosphoserine. The segment covering 1771–1782 has biased composition (pro residues); the sequence is FPGPRGPAPPFP. Arginine 1835 bears the Omega-N-methylarginine mark. Residues 1842-1856 show a composition bias toward basic and acidic residues; sequence FEERKDPHGEKREFQ. Residues arginine 1893, arginine 1894, arginine 1977, arginine 1982, arginine 1993, arginine 2008, and arginine 2024 each carry the asymmetric dimethylarginine modification. Residues 2044–2059 show a composition bias toward low complexity; sequence AGPPSALSSSAPGQGP. Composition is skewed to basic and acidic residues over residues 2069–2101 and 2109–2230; these read DFREGKGHEYRNQTFEGRQRERFDVGPKEKPLE and ASED…EASR.

As to quaternary structure, interacts specifically (via PHD-type zinc finger) with histone H3 that is trimethylated at 'Lys-4' (H3K4me3), histone phosphorylation at 'Thr-3' or 'Thr-6' disrupts this binding and promotes translocation of DIDO1 from chromatin to the mitotic spindle during mitosis. Ubiquitous.

The protein resides in the cytoplasm. Its subcellular location is the nucleus. The protein localises to the cytoskeleton. It is found in the spindle. Putative transcription factor, weakly pro-apoptotic when overexpressed. Tumor suppressor. Required for early embryonic stem cell development. Its function is as follows. Displaces isoform 4 at the onset of differentiation, required for repression of stemness genes. The chain is Death-inducer obliterator 1 (DIDO1) from Homo sapiens (Human).